Reading from the N-terminus, the 286-residue chain is MRSVGLIPNIQKDQVAEITSRMYKILSEHDIDVYLTHEGADLIGTESAGVSSDVMGEVAEMIIILGGDGTILKAAREYAPYDIPLLGINLGKMGFLAEIEANEVMAYLESLLTGNYTIEERMMLDATVLRDRKEITTFSALNDVIIAKGPFSRIIEVETKVGGNYLETYPGDGLIVTSPTGSTGYSFSAGGPIISSNLEVMMITPICPHLMHNRSVIISSDEVVTAKMKTNYAVVVLTVDGQQGFTLQDGDEIKVKKSNYKTKLVKLRRRSFYQLLNEKLTGGQEV.

Asp-68 (proton acceptor) is an active-site residue. NAD(+) is bound by residues 68–69 (DG), Lys-73, 142–143 (ND), Arg-153, Asp-172, 183–188 (TGYSFS), and Gln-242.

This sequence belongs to the NAD kinase family. Requires a divalent metal cation as cofactor.

It is found in the cytoplasm. The catalysed reaction is NAD(+) + ATP = ADP + NADP(+) + H(+). Functionally, involved in the regulation of the intracellular balance of NAD and NADP, and is a key enzyme in the biosynthesis of NADP. Catalyzes specifically the phosphorylation on 2'-hydroxyl of the adenosine moiety of NAD to yield NADP. This Natranaerobius thermophilus (strain ATCC BAA-1301 / DSM 18059 / JW/NM-WN-LF) protein is NAD kinase.